We begin with the raw amino-acid sequence, 374 residues long: Histidinol-phosphate aminotransferase (374 aa).

Position 211 is an N6-(pyridoxal phosphate)lysine (K211). Residues 351–368 (GNSSQDSASKSNSSANND) are compositionally biased toward low complexity. The interval 351–374 (GNSSQDSASKSNSSANNDELNASN) is disordered.

Belongs to the class-II pyridoxal-phosphate-dependent aminotransferase family. Histidinol-phosphate aminotransferase subfamily. In terms of assembly, homodimer. Pyridoxal 5'-phosphate is required as a cofactor.

It catalyses the reaction L-histidinol phosphate + 2-oxoglutarate = 3-(imidazol-4-yl)-2-oxopropyl phosphate + L-glutamate. The protein operates within amino-acid biosynthesis; L-histidine biosynthesis; L-histidine from 5-phospho-alpha-D-ribose 1-diphosphate: step 7/9. This Photobacterium profundum (strain SS9) protein is Histidinol-phosphate aminotransferase.